Here is a 164-residue protein sequence, read N- to C-terminus: Lipoprotein signal peptidase (164 aa).

Helical transmembrane passes span 6–26 (LGILTAVIALALDQATKLWLL), 39–59 (VTSFFDLVLAWNTGISYGWFA), 65–85 (GQILMLAFKAVAIVALAIWMA), and 88–108 (TTKLATIGLGLIIGGAIGNAI). Residues Asp-118 and Asp-140 contribute to the active site. Residues 141-161 (VAIVVGVVALLYDSLIGAPAV) traverse the membrane as a helical segment.

Belongs to the peptidase A8 family.

It is found in the cell inner membrane. It catalyses the reaction Release of signal peptides from bacterial membrane prolipoproteins. Hydrolyzes -Xaa-Yaa-Zaa-|-(S,diacylglyceryl)Cys-, in which Xaa is hydrophobic (preferably Leu), and Yaa (Ala or Ser) and Zaa (Gly or Ala) have small, neutral side chains.. It participates in protein modification; lipoprotein biosynthesis (signal peptide cleavage). Its function is as follows. This protein specifically catalyzes the removal of signal peptides from prolipoproteins. This is Lipoprotein signal peptidase from Rhodopseudomonas palustris (strain TIE-1).